The sequence spans 274 residues: Thiamine kinase (274 aa).

Belongs to the thiamine kinase family.

The catalysed reaction is thiamine + ATP = thiamine phosphate + ADP + H(+). Its pathway is cofactor biosynthesis; thiamine diphosphate biosynthesis; thiamine phosphate from thiamine: step 1/1. In terms of biological role, catalyzes the ATP-dependent phosphorylation of thiamine to thiamine phosphate. Is involved in thiamine salvage. The protein is Thiamine kinase of Escherichia coli O17:K52:H18 (strain UMN026 / ExPEC).